A 287-amino-acid chain; its full sequence is Lys-63-specific deubiquitinase (287 aa).

In terms of domain architecture, MPN spans 33-176 (VHLESDAFLV…YTCFQSVQAQ (144 aa)). Zn(2+) contacts are provided by His119, His121, and Asp132. Residues 119–132 (HSHPHITVWPSHVD) carry the JAMM motif motif. Residues 256-283 (LQWLEDRLEQNKQSIITLQKEKELLTQE) are a coiled coil.

Belongs to the peptidase M67A family. BRCC36 subfamily. Monomer. Homodimer. Component of the BRISC complex, at least composed of abraxas2, brcc3, babam1 and babam2. Interacts with abraxas2; the interaction is direct and may form a heterotetramer. Component of the BRCA1-A complex. Both the BRCA1-A complex and the BRISC complex bind polyubiquitin. The cofactor is Zn(2+).

It is found in the nucleus. The protein localises to the cytoplasm. The protein resides in the cytoskeleton. Its subcellular location is the spindle pole. Metalloprotease that specifically cleaves 'Lys-63'-linked polyubiquitin chains, leaving the last ubiquitin chain attached to its substrates. Catalytic subunit of the BRISC complex, a multiprotein complex that specifically cleaves 'Lys-63'-linked ubiquitin in various substrates; brcc3 does not have activity by itself, but needs to be associated into a higher-order assembly, for minimal in vitro activity. The sequence is that of Lys-63-specific deubiquitinase from Danio rerio (Zebrafish).